We begin with the raw amino-acid sequence, 331 residues long: MTTPIVFCNPSNIEESLLYINKSLFSKGVIQAEKLRLSHDIRDNCNIVNIIYRLLRATDEERLEKESLLDAIKNNEYEKQRDNNTIKRLKNELELYQNECQLQLNKVRTLERDQAELITQNKGLKDVNAKNELTLKALKNQLSVSLRQHEQQMETLKGNYGLVKARKGRNLNSMLIVKEPIKQNTNAPILPETASFLQQNDENSNFLNSRVNNDEFQLLKGLNNELKKSNGTLLTCLSGTLNSLVEMLSPLYERPNSNPFEVCELNAILLDAKIQNQLLFIRNLLHERKYVSIDELDAILEENEKNKHLINILQKENKRVFEFLTNMHDKF.

Positions Ile72–Arg166 form a coiled coil.

It belongs to the ADIP family.

Its subcellular location is the cytoplasm. Has a role in meiosis. The polypeptide is Meiotically up-regulated gene 172 protein (mug172) (Schizosaccharomyces pombe (strain 972 / ATCC 24843) (Fission yeast)).